The chain runs to 262 residues: Small ribosomal subunit protein eS4C (262 aa).

Residues 42–105 enclose the S4 RNA-binding domain; it reads LPLIVFLRNR…GEHFRLVYDI (64 aa). Residue Thr-194 is modified to Phosphothreonine.

Belongs to the eukaryotic ribosomal protein eS4 family. In terms of assembly, component of the small ribosomal subunit (SSU). Mature yeast ribosomes consist of a small (40S) and a large (60S) subunit. The 40S small subunit contains 1 molecule of ribosomal RNA (18S rRNA) and at least 33 different proteins. The large 60S subunit contains 3 rRNA molecules (25S, 5.8S and 5S rRNA) and at least 46 different proteins.

The protein resides in the cytoplasm. In terms of biological role, component of the ribosome, a large ribonucleoprotein complex responsible for the synthesis of proteins in the cell. The small ribosomal subunit (SSU) binds messenger RNAs (mRNAs) and translates the encoded message by selecting cognate aminoacyl-transfer RNA (tRNA) molecules. The large subunit (LSU) contains the ribosomal catalytic site termed the peptidyl transferase center (PTC), which catalyzes the formation of peptide bonds, thereby polymerizing the amino acids delivered by tRNAs into a polypeptide chain. The nascent polypeptides leave the ribosome through a tunnel in the LSU and interact with protein factors that function in enzymatic processing, targeting, and the membrane insertion of nascent chains at the exit of the ribosomal tunnel. This Schizosaccharomyces pombe (strain 972 / ATCC 24843) (Fission yeast) protein is Small ribosomal subunit protein eS4C (rps403).